We begin with the raw amino-acid sequence, 374 residues long: Putative glutamate--cysteine ligase 2 (374 aa).

Belongs to the glutamate--cysteine ligase type 2 family. YbdK subfamily.

It carries out the reaction L-cysteine + L-glutamate + ATP = gamma-L-glutamyl-L-cysteine + ADP + phosphate + H(+). In terms of biological role, ATP-dependent carboxylate-amine ligase which exhibits weak glutamate--cysteine ligase activity. This Acidovorax sp. (strain JS42) protein is Putative glutamate--cysteine ligase 2.